Reading from the N-terminus, the 286-residue chain is ATP synthase gamma chain (286 aa).

The protein belongs to the ATPase gamma chain family. As to quaternary structure, F-type ATPases have 2 components, CF(1) - the catalytic core - and CF(0) - the membrane proton channel. CF(1) has five subunits: alpha(3), beta(3), gamma(1), delta(1), epsilon(1). CF(0) has three main subunits: a, b and c.

Its subcellular location is the cell inner membrane. In terms of biological role, produces ATP from ADP in the presence of a proton gradient across the membrane. The gamma chain is believed to be important in regulating ATPase activity and the flow of protons through the CF(0) complex. The chain is ATP synthase gamma chain from Shewanella sp. (strain MR-4).